Reading from the N-terminus, the 229-residue chain is MSSETGPVVVDPTLRRRIEPHEFDAFFDQGELRKETCLLYEIRWGGRHNIWRHTGQNTSRHVEINFIEKFTSERYFYPSTRCSIVWFLSWSPCGECSKAITEFLSGHPNVTLFIYAARLYHHTDQRNRQGLRDLISRGVTIRIMTEQEYCYCWRNFVNYPPSNEVYWPRYPNLWMRLYALELYCIHLGLPPCLKIKRRHQYPLTFFRLNLQSCHYQRIPPHILWATGFI.

The 125-residue stretch at 10–134 folds into the CMP/dCMP-type deaminase domain; that stretch reads VDPTLRRRIE…QRNRQGLRDL (125 aa). Residue His61 participates in Zn(2+) binding. Glu63 (proton donor) is an active-site residue. Zn(2+) is bound by residues Cys93 and Cys96.

It belongs to the cytidine and deoxycytidylate deaminase family. Homodimer. Interacts with A1CF; form an mRNA editing complex. Interacts with RBM47; form an mRNA editing complex. Found in a complex with CELF2/CUGBP2 and A1CF. Interacts with HNRPAB. Interacts with SYNCRIP. Requires Zn(2+) as cofactor.

Its subcellular location is the cytoplasm. The protein localises to the nucleus. It carries out the reaction a cytidine in mRNA + H2O + H(+) = a uridine in mRNA + NH4(+). The enzyme catalyses cytidine(6666) in apoB mRNA + H2O + H(+) = uridine(6666) in apoB mRNA + NH4(+). Cytidine deaminase catalyzing the cytidine to uridine postranscriptional editing of a variety of mRNAs. Form complexes with cofactors that confer differential editing activity and selectivity. Responsible for the postranscriptional editing of a CAA codon for Gln to a UAA codon for stop in the apolipoprotein B mRNA. Also involved in CGA (Arg) to UGA (Stop) editing in the NF1 mRNA. May also play a role in the epigenetic regulation of gene expression by participating in DNA demethylation. The chain is C-&gt;U-editing enzyme APOBEC-1 from Mesocricetus auratus (Golden hamster).